The primary structure comprises 64 residues: UPF0434 protein MADE_1009415 (64 aa).

The protein belongs to the UPF0434 family.

This chain is UPF0434 protein MADE_1009415, found in Alteromonas mediterranea (strain DSM 17117 / CIP 110805 / LMG 28347 / Deep ecotype).